A 426-amino-acid polypeptide reads, in one-letter code: Histidine--tRNA ligase (426 aa).

This sequence belongs to the class-II aminoacyl-tRNA synthetase family. As to quaternary structure, homodimer.

It localises to the cytoplasm. The enzyme catalyses tRNA(His) + L-histidine + ATP = L-histidyl-tRNA(His) + AMP + diphosphate + H(+). The protein is Histidine--tRNA ligase of Streptococcus sanguinis (strain SK36).